Reading from the N-terminus, the 238-residue chain is Putative csd-like protein HI_1343 (238 aa).

The residue at position 146 (K146) is an N6-(pyridoxal phosphate)lysine.

The protein belongs to the class-V pyridoxal-phosphate-dependent aminotransferase family. Csd subfamily.

The chain is Putative csd-like protein HI_1343 from Haemophilus influenzae (strain ATCC 51907 / DSM 11121 / KW20 / Rd).